The following is a 304-amino-acid chain: Ribonuclease Z (304 aa).

Zn(2+)-binding residues include His-64, His-66, Asp-68, His-69, His-141, Asp-209, and His-267. Asp-68 (proton acceptor) is an active-site residue.

It belongs to the RNase Z family. In terms of assembly, homodimer. The cofactor is Zn(2+).

The catalysed reaction is Endonucleolytic cleavage of RNA, removing extra 3' nucleotides from tRNA precursor, generating 3' termini of tRNAs. A 3'-hydroxy group is left at the tRNA terminus and a 5'-phosphoryl group is left at the trailer molecule.. Its function is as follows. Zinc phosphodiesterase, which displays some tRNA 3'-processing endonuclease activity. Probably involved in tRNA maturation, by removing a 3'-trailer from precursor tRNA. The sequence is that of Ribonuclease Z from Thermoplasma volcanium (strain ATCC 51530 / DSM 4299 / JCM 9571 / NBRC 15438 / GSS1).